The chain runs to 1163 residues: NACHT, LRR and PYD domains-containing protein 5 (1163 aa).

Basic and acidic residues-rich tracts occupy residues 1 to 42, 56 to 94, and 108 to 127; these read MGPP…KDQG, PEKE…KDQG, and PEKD…EQKS. The interval 1-201 is disordered; sequence MGPPEKESKA…TEADKDNGGD (201 aa). Residues 128–137 show a composition bias toward polar residues; that stretch reads ESTMSPSENV. Over residues 153–173 the composition is skewed to basic and acidic residues; the sequence is ASERKMTSPENDSKSIQKDQG. The NACHT domain maps to 243–565; the sequence is HTIILHGRPG…AALYYVLEGL (323 aa). Residue 249–256 coordinates ATP; it reads GRPGVGKS. LRR repeat units lie at residues 801-822, 830-851, 858-878, 887-906, 915-935, 944-964, 972-993, 1001-1022, 1029-1050, 1058-1079, and 1086-1107; these read NLKY…LACE, SVET…MIST, RLKC…ISLG, LLQK…CHLL, NLTH…QQLC, ALQR…GFLA, KLTH…LLCE, YLQE…DLAC, HLKS…TLCE, SLRR…ALSL, and HLNS…KLCS.

It belongs to the NLRP family. In terms of assembly, component of the subcortical maternal complex (SCMC), at least composed of NLRP5, KHDC3, OOEP, and TLE6. Within the complex, interacts with OOEP, KHDC3 and TLE6. The SCMC may facilitate translocation of its components between the nuclear and cytoplasmic compartments. As part of the SCMC interacts with the SCMC-associated protein ZBED3. As part of the SCMC interacts with the SCMC-associated protein CFL1/Cofilin-1. Interacts with PRKCE. Interacts with TUBB3 at cytoskeleton microtubules. Post-translationally, phosphorylated by PRKCE.

The protein localises to the cytoplasm. It is found in the cytoplasmic vesicle. Its subcellular location is the secretory vesicle. The protein resides in the cortical granule. It localises to the mitochondrion. The protein localises to the nucleus. It is found in the nucleolus. Its subcellular location is the golgi apparatus. Functionally, component of the subcortical maternal complex (SCMC), a multiprotein complex that plays a key role in early embryonic development. The SCMC complex is a structural constituent of cytoplasmic lattices, which consist in fibrous structures found in the cytoplasm of oocytes and preimplantation embryos. They are required to store maternal proteins critical for embryonic development, such as proteins that control epigenetic reprogramming of the preimplantation embryo, and prevent their degradation or activation. Required for the localization of cortical granules to the cortex of oocytes, via association with the cortical actin scaffold. Required for cortical actin clearance prior to oocyte exocytosis and prevention of polyspermy. Involved in regulating post-fertilization Ca(2+) release and endoplasmic reticulum storage (ER) storage via regulation of cellular localization. May be involved in the localization of mitochondria to the cytoplasm and perinuclear region in oocytes and early stage embryos, independent of its role in CPL formation. The protein is NACHT, LRR and PYD domains-containing protein 5 of Mus musculus (Mouse).